We begin with the raw amino-acid sequence, 69 residues long: UPF0337 protein XAC4007 (69 aa).

This sequence belongs to the UPF0337 (CsbD) family.

This chain is UPF0337 protein XAC4007, found in Xanthomonas axonopodis pv. citri (strain 306).